The sequence spans 382 residues: Chaperone protein DnaJ (382 aa).

Residues 5 to 69 (DLYGVLGVAK…QKRANYDQSG (65 aa)) enclose the J domain. The disordered stretch occupies residues 104–123 (QFFGGGGGQRNPNAPRPGRD). The CR-type zinc finger occupies 138–220 (GKKTKIKYNR…CGGSGHEEER (83 aa)). Zn(2+) contacts are provided by cysteine 151, cysteine 154, cysteine 168, cysteine 171, cysteine 194, cysteine 197, cysteine 208, and cysteine 211. CXXCXGXG motif repeat units lie at residues 151-158 (CHTCGGNG), 168-175 (CHQCGGSG), 194-201 (CPVCHGTG), and 208-215 (CPTCGGSG). The segment at 358–382 (ASGESVTGSGKGNLFNKMRDKFNEN) is disordered.

This sequence belongs to the DnaJ family. Homodimer. It depends on Zn(2+) as a cofactor.

Its subcellular location is the cytoplasm. Participates actively in the response to hyperosmotic and heat shock by preventing the aggregation of stress-denatured proteins and by disaggregating proteins, also in an autonomous, DnaK-independent fashion. Unfolded proteins bind initially to DnaJ; upon interaction with the DnaJ-bound protein, DnaK hydrolyzes its bound ATP, resulting in the formation of a stable complex. GrpE releases ADP from DnaK; ATP binding to DnaK triggers the release of the substrate protein, thus completing the reaction cycle. Several rounds of ATP-dependent interactions between DnaJ, DnaK and GrpE are required for fully efficient folding. Also involved, together with DnaK and GrpE, in the DNA replication of plasmids through activation of initiation proteins. This is Chaperone protein DnaJ from Levilactobacillus brevis (strain ATCC 367 / BCRC 12310 / CIP 105137 / JCM 1170 / LMG 11437 / NCIMB 947 / NCTC 947) (Lactobacillus brevis).